The chain runs to 833 residues: Major vault protein (833 aa).

MVP repeat units lie at residues 54–118, 119–170, 171–223, 224–278, 280–328, 329–380, and 381–433; these read RHYC…QLIP, PNTG…TVIY, PNTA…TMLS, DLKA…VSLS, KEYV…LVVG, KEEA…MALD, and KNEG…SIQT.

In terms of assembly, the vault ribonucleoprotein particle is a huge (400 A x 670 A) cage structure of 12.9 MDa. It consists of a dimer of half-vaults, with each half-vault comprising 39 identical major vault protein (MVP) chains, PARP4 and one or more vault RNAs (vRNAs).

It is found in the cytoplasm. It localises to the nucleus. In terms of biological role, required for normal vault structure. Vaults are multi-subunit structures that may act as scaffolds for proteins involved in signal transduction. Vaults may also play a role in nucleo-cytoplasmic transport. The polypeptide is Major vault protein (Leishmania infantum).